Consider the following 362-residue polypeptide: Ferrochelatase (362 aa).

The Fe cation site is built by His212 and Glu294.

This sequence belongs to the ferrochelatase family.

The protein localises to the cytoplasm. It catalyses the reaction heme b + 2 H(+) = protoporphyrin IX + Fe(2+). It participates in porphyrin-containing compound metabolism; protoheme biosynthesis; protoheme from protoporphyrin-IX: step 1/1. In terms of biological role, catalyzes the ferrous insertion into protoporphyrin IX. This chain is Ferrochelatase, found in Leptospira biflexa serovar Patoc (strain Patoc 1 / Ames).